A 145-amino-acid chain; its full sequence is Early nodulin-like protein 21 (145 aa).

Positions 1–17 (MFLWLVIVLTISASVSS) are cleaved as a signal peptide. The region spanning 18-116 (YEHKLNWVVP…GQKMIVEVIS (99 aa)) is the Phytocyanin domain. N-linked (GlcNAc...) asparagine glycans are attached at residues Asn30 and Asn71. Cys70 and Cys104 are oxidised to a cystine. Ser116 carries GPI-anchor amidated serine lipidation. Residues 117–145 (RDHTTTSAAPPAAFAVLLCFFSLSLYFVA) constitute a propeptide, removed in mature form.

Belongs to the early nodulin-like (ENODL) family. As to expression, mostly expressed in leaves and flowers, and, to a lower extent, in roots and stems, but barely in seedlings and seeds.

It is found in the cell membrane. May act as a carbohydrate transporter. The polypeptide is Early nodulin-like protein 21 (Arabidopsis thaliana (Mouse-ear cress)).